The sequence spans 212 residues: Peroxisomal membrane protein 4 (212 aa).

A run of 2 helical transmembrane segments spans residues 97 to 117 and 153 to 173; these read GKTY…LVFG and LDPF…LFEY. Residue Asn-206 is glycosylated (N-linked (GlcNAc...) asparagine).

This sequence belongs to the peroxisomal membrane protein PXMP2/4 family. Interacts with PEX19.

The protein localises to the peroxisome membrane. This is Peroxisomal membrane protein 4 (PXMP4) from Bos taurus (Bovine).